A 66-amino-acid chain; its full sequence is U-scoloptoxin(24)-Er2a (66 aa).

Residues 1–23 (MVKPLHCLIGIVLFLAVLNAGNG) form the signal peptide. The tract at residues 43 to 66 (SLFHGNQRKKRSEEKRFSDMEQTK) is disordered. A compositionally biased stretch (basic and acidic residues) spans 53 to 66 (RSEEKRFSDMEQTK).

It belongs to the scoloptoxin-24 family. In terms of tissue distribution, expressed by the venom gland.

It localises to the secreted. This chain is U-scoloptoxin(24)-Er2a, found in Ethmostigmus rubripes (Giant centipede).